Here is a 40-residue protein sequence, read N- to C-terminus: Trypsin inhibitor (40 aa).

In terms of assembly, monomer.

It catalyses the reaction Preferential cleavage: Arg-|-Xaa, Lys-|-Xaa.. Its function is as follows. Inhibits trypsin but not chymotrypsin, papain or porcine pancreatic alpha-amylase. Has insecticidal activity against A.aegypti. Functions by inhibiting the A.aegypti midgut proteases to reduce the survival of larva and adults. The polypeptide is Trypsin inhibitor (Cassia leiandra (Marimari)).